The following is a 98-amino-acid chain: NADH-ubiquinone oxidoreductase chain 4L (98 aa).

A run of 3 helical transmembrane segments spans residues 1–21, 29–49, and 61–81; these read MSLTYMNMFMAFTISLLGLLM, SLLCLEGMMLSLFVMMTMVIL, and IILLVFAACEAALGLSLLVMV.

This sequence belongs to the complex I subunit 4L family. As to quaternary structure, core subunit of respiratory chain NADH dehydrogenase (Complex I) which is composed of 45 different subunits.

It localises to the mitochondrion inner membrane. It carries out the reaction a ubiquinone + NADH + 5 H(+)(in) = a ubiquinol + NAD(+) + 4 H(+)(out). Core subunit of the mitochondrial membrane respiratory chain NADH dehydrogenase (Complex I) which catalyzes electron transfer from NADH through the respiratory chain, using ubiquinone as an electron acceptor. Part of the enzyme membrane arm which is embedded in the lipid bilayer and involved in proton translocation. The protein is NADH-ubiquinone oxidoreductase chain 4L (MT-ND4L) of Vampyressa thyone (Northern little yellow-eared bat).